A 1451-amino-acid chain; its full sequence is ABC transporter G family member 32 (1451 aa).

Residues 162-435 form the ABC transporter 1 domain; sequence GNALHISPTR…FELMGFRCPQ (274 aa). An ATP-binding site is contributed by 195-202; the sequence is GPPGSGKT. The ABC transmembrane type-2 1 domain occupies 513–725; it reads ALLKANIDRE…AQNAISTNEF (213 aa). A run of 6 helical transmembrane segments spans residues 531-551, 563-583, 618-638, 650-670, 674-694, and 760-780; these read FVYI…MTTF, GTIY…NGFA, IPVT…VVGF, LLLV…AGIG, VVSQ…GGFI, and IGFG…TVAL. Residues 809 to 835 form a disordered region; the sequence is ILDSCEEKKSRKKEQSQSVNQKHWNNT. Residues 813–823 show a composition bias toward basic and acidic residues; the sequence is CEEKKSRKKEQ. Residues 853 to 1105 form the ABC transporter 2 domain; that stretch reads LSFNDIKYSV…KLIEYFEGIE (253 aa). 898-905 serves as a coordination point for ATP; the sequence is GVSGAGKT. Positions 1178–1392 constitute an ABC transmembrane type-2 2 domain; sequence TQCIACLWKH…TLYGLVASQF (215 aa). 7 helical membrane passes run 1197–1217, 1237–1257, 1285–1305, 1312–1332, 1342–1362, 1373–1393, and 1423–1443; these read YTAV…TMFW, YAAV…VVVV, LPYI…MIGF, FIWY…FGMM, IAAI…GYLI, WYCW…SQFG, and LVAV…SFAI.

It belongs to the ABC transporter superfamily. ABCG family. PDR (TC 3.A.1.205) subfamily.

The protein resides in the membrane. Functionally, may be a general defense protein. The polypeptide is ABC transporter G family member 32 (Oryza sativa subsp. japonica (Rice)).